The primary structure comprises 309 residues: Homoserine kinase (309 aa).

Residue 91–101 (PIGSGLGSSAC) coordinates ATP.

It belongs to the GHMP kinase family. Homoserine kinase subfamily.

The protein localises to the cytoplasm. It carries out the reaction L-homoserine + ATP = O-phospho-L-homoserine + ADP + H(+). It functions in the pathway amino-acid biosynthesis; L-threonine biosynthesis; L-threonine from L-aspartate: step 4/5. Functionally, catalyzes the ATP-dependent phosphorylation of L-homoserine to L-homoserine phosphate. The protein is Homoserine kinase of Edwardsiella ictaluri (strain 93-146).